The primary structure comprises 330 residues: GMP reductase (330 aa).

Residue Cys-180 is the Thioimidate intermediate of the active site. 209-232 (LIADGGIRHNGDIAKSVRFGASMV) is a binding site for NADP(+).

The protein belongs to the IMPDH/GMPR family. GuaC type 2 subfamily.

It carries out the reaction IMP + NH4(+) + NADP(+) = GMP + NADPH + 2 H(+). In terms of biological role, catalyzes the irreversible NADPH-dependent deamination of GMP to IMP. It functions in the conversion of nucleobase, nucleoside and nucleotide derivatives of G to A nucleotides, and in maintaining the intracellular balance of A and G nucleotides. This Lactobacillus delbrueckii subsp. bulgaricus (strain ATCC BAA-365 / Lb-18) protein is GMP reductase.